A 358-amino-acid chain; its full sequence is Peptide chain release factor 1 (358 aa).

Gln233 is subject to N5-methylglutamine.

Belongs to the prokaryotic/mitochondrial release factor family. Methylated by PrmC. Methylation increases the termination efficiency of RF1.

The protein localises to the cytoplasm. Peptide chain release factor 1 directs the termination of translation in response to the peptide chain termination codons UAG and UAA. This is Peptide chain release factor 1 from Brevibacillus brevis (strain 47 / JCM 6285 / NBRC 100599).